The following is a 1380-amino-acid chain: DNA-directed RNA polymerase subunit beta (1380 aa).

Belongs to the RNA polymerase beta chain family. In terms of assembly, the RNAP catalytic core consists of 2 alpha, 1 beta, 1 beta' and 1 omega subunit. When a sigma factor is associated with the core the holoenzyme is formed, which can initiate transcription.

The catalysed reaction is RNA(n) + a ribonucleoside 5'-triphosphate = RNA(n+1) + diphosphate. DNA-dependent RNA polymerase catalyzes the transcription of DNA into RNA using the four ribonucleoside triphosphates as substrates. The sequence is that of DNA-directed RNA polymerase subunit beta from Sinorhizobium fredii (strain NBRC 101917 / NGR234).